The chain runs to 166 residues: Small ribosomal subunit protein uS5 (166 aa).

In terms of domain architecture, S5 DRBM spans 12–75 (YIEKLVQVNR…EAARRNMIQV (64 aa)).

The protein belongs to the universal ribosomal protein uS5 family. As to quaternary structure, part of the 30S ribosomal subunit. Contacts proteins S4 and S8.

In terms of biological role, with S4 and S12 plays an important role in translational accuracy. Located at the back of the 30S subunit body where it stabilizes the conformation of the head with respect to the body. This Pseudomonas fluorescens (strain ATCC BAA-477 / NRRL B-23932 / Pf-5) protein is Small ribosomal subunit protein uS5.